The following is a 579-amino-acid chain: Pre-mRNA-processing factor 17 (579 aa).

Residues 1-19 (MSAAIAALAASYGSGSGSE) are compositionally biased toward low complexity. Disordered stretches follow at residues 1–47 (MSAA…PSSK) and 204–237 (DVAKPSEEEQKELDEITAKRQKKGKQEEEKPGEE). At Ser46 the chain carries Phosphoserine. 7 WD repeats span residues 286-326 (GHTK…RCLR), 330-369 (GHSKAVRDICFNTAGTQFLSAAYDRYLKLWDTETGQCISR), 371-413 (TNRK…IVQE), 416-455 (RHLGAVNTIVFVDENRRFVSTSDDKSLRVWEWDIPVDFKY), 459-498 (PSMHSMPAVTLSPNGKWLACQSMDNQILIFGAQNRFRLNK), 504-545 (GHMV…LYSR), and 548-578 (AHDKVCIGAVWHPHETSKVITCGWDGLIKLW).

Component of the pre-catalytic and catalytic spliceosome complexes. Component of the postcatalytic spliceosome P complex. Interacts with PPIL1; this interaction leads to CDC40 isomerization. In terms of processing, undergoes isomerization of the peptide bond between Gly-94 and Pro-95. The reaction is catalyzed by PPIL1.

The protein resides in the nucleus. It is found in the nucleus speckle. Required for pre-mRNA splicing as component of the activated spliceosome. Plays an important role in embryonic brain development; this function does not require proline isomerization. This Homo sapiens (Human) protein is Pre-mRNA-processing factor 17 (CDC40).